The chain runs to 301 residues: GTPase Era (301 aa).

Residues 6–173 form the Era-type G domain; the sequence is KSGFVAIVGR…LEQTNANLEI (168 aa). A G1 region spans residues 14–21; the sequence is GRPNVGKS. GTP is bound at residue 14–21; it reads GRPNVGKS. A G2 region spans residues 40–44; the sequence is QTTRN. The segment at 61–64 is G3; sequence DTPG. Residues 61–65 and 123–126 each bind GTP; these read DTPGI and NKID. Positions 123–126 are G4; sequence NKID. Residues 152–154 form a G5 region; that stretch reads ISA. The KH type-2 domain occupies 204–282; that stretch reads TREEVPHSVA…FLEIWVKVQK (79 aa).

This sequence belongs to the TRAFAC class TrmE-Era-EngA-EngB-Septin-like GTPase superfamily. Era GTPase family. Monomer.

It is found in the cytoplasm. It localises to the cell membrane. An essential GTPase that binds both GDP and GTP, with rapid nucleotide exchange. Plays a role in 16S rRNA processing and 30S ribosomal subunit biogenesis and possibly also in cell cycle regulation and energy metabolism. The sequence is that of GTPase Era from Listeria innocua serovar 6a (strain ATCC BAA-680 / CLIP 11262).